Consider the following 156-residue polypeptide: Snaclec stejaggregin-B subunit alpha (156 aa).

The first 23 residues, 1 to 23 (MGRFISVSFGLLVVFLSLSGTGA), serve as a signal peptide directing secretion. Cystine bridges form between Cys25/Cys36, Cys53/Cys150, and Cys125/Cys142. One can recognise a C-type lectin domain in the interval 32–151 (FKQYCYQIIK…CEQKHLFMCK (120 aa)).

The protein belongs to the snaclec family. Heteromultimer; disulfide-linked. Expressed by the venom gland.

Its subcellular location is the secreted. In terms of biological role, interferes with one step of hemostasis (modulation of platelet aggregation, or coagulation cascade, for example). The chain is Snaclec stejaggregin-B subunit alpha from Trimeresurus stejnegeri (Chinese green tree viper).